We begin with the raw amino-acid sequence, 236 residues long: Orotidine 5'-phosphate decarboxylase (236 aa).

Substrate is bound by residues Asp14, Lys36, 63–72, Thr122, Arg183, Gln192, Gly212, and Arg213; that span reads DLKFHDIPNT. Lys65 acts as the Proton donor in catalysis.

Belongs to the OMP decarboxylase family. Type 1 subfamily. In terms of assembly, homodimer.

It carries out the reaction orotidine 5'-phosphate + H(+) = UMP + CO2. It functions in the pathway pyrimidine metabolism; UMP biosynthesis via de novo pathway; UMP from orotate: step 2/2. Catalyzes the decarboxylation of orotidine 5'-monophosphate (OMP) to uridine 5'-monophosphate (UMP). The sequence is that of Orotidine 5'-phosphate decarboxylase from Chromohalobacter salexigens (strain ATCC BAA-138 / DSM 3043 / CIP 106854 / NCIMB 13768 / 1H11).